The primary structure comprises 246 residues: Uridylate kinase (246 aa).

10 to 13 is an ATP binding site; that stretch reads KLSG. Gly52 lines the UMP pocket. 2 residues coordinate ATP: Gly53 and Arg57. UMP is bound by residues Asp72 and 133-140; that span reads TGNPFFTT. Thr160, Tyr166, and Asp169 together coordinate ATP.

This sequence belongs to the UMP kinase family. As to quaternary structure, homohexamer.

The protein localises to the cytoplasm. It carries out the reaction UMP + ATP = UDP + ADP. It functions in the pathway pyrimidine metabolism; CTP biosynthesis via de novo pathway; UDP from UMP (UMPK route): step 1/1. Its activity is regulated as follows. Inhibited by UTP. Catalyzes the reversible phosphorylation of UMP to UDP. This is Uridylate kinase from Halorhodospira halophila (strain DSM 244 / SL1) (Ectothiorhodospira halophila (strain DSM 244 / SL1)).